The primary structure comprises 375 residues: Succinyl-diaminopimelate desuccinylase (375 aa).

Histidine 66 contacts Zn(2+). Aspartate 68 is an active-site residue. Aspartate 99 is a Zn(2+) binding site. The Proton acceptor role is filled by glutamate 133. Zn(2+) contacts are provided by glutamate 134, glutamate 162, and histidine 348.

This sequence belongs to the peptidase M20A family. DapE subfamily. In terms of assembly, homodimer. Requires Zn(2+) as cofactor. It depends on Co(2+) as a cofactor.

It catalyses the reaction N-succinyl-(2S,6S)-2,6-diaminopimelate + H2O = (2S,6S)-2,6-diaminopimelate + succinate. It participates in amino-acid biosynthesis; L-lysine biosynthesis via DAP pathway; LL-2,6-diaminopimelate from (S)-tetrahydrodipicolinate (succinylase route): step 3/3. In terms of biological role, catalyzes the hydrolysis of N-succinyl-L,L-diaminopimelic acid (SDAP), forming succinate and LL-2,6-diaminopimelate (DAP), an intermediate involved in the bacterial biosynthesis of lysine and meso-diaminopimelic acid, an essential component of bacterial cell walls. This Teredinibacter turnerae (strain ATCC 39867 / T7901) protein is Succinyl-diaminopimelate desuccinylase.